We begin with the raw amino-acid sequence, 102 residues long: MRLSVTALLVTLALCYYEANAIVCPTFAADLTEFFYFPDLLYRLSLAKYNAPPEAVAAKMEVKQCTDRFSVKNRLIITNILGKILLNCTVTDVKAVLNPSSA.

The signal sequence occupies residues 1-21; the sequence is MRLSVTALLVTLALCYYEANA. Asn-87 is a glycosylation site (N-linked (GlcNAc...) asparagine).

The protein belongs to the secretoglobin family. Lipophilin subfamily.

Its subcellular location is the secreted. Functionally, may bind androgens and other steroids. May be under transcriptional regulation of steroid hormones. The chain is Secretoglobin family 1D member (SCGB1D) from Bos taurus (Bovine).